A 510-amino-acid chain; its full sequence is Maturase K (510 aa).

The protein belongs to the intron maturase 2 family. MatK subfamily.

It localises to the plastid. The protein localises to the chloroplast. Functionally, usually encoded in the trnK tRNA gene intron. Probably assists in splicing its own and other chloroplast group II introns. The polypeptide is Maturase K (Gratiola officinalis (Hedgehyssop)).